The primary structure comprises 1099 residues: Transmembrane protein 132C (1099 aa).

A signal peptide spans 1-31; the sequence is MRSEGAAPRRAARYGALSLVLATLLGQVTES. Residues 32–915 lie on the Extracellular side of the membrane; sequence RGVMDNIQRF…LMQTAHGLSD (884 aa). N95 carries an N-linked (GlcNAc...) asparagine glycan. Positions 237 to 260 are disordered; the sequence is GDCTGGDTRKDNAIRPGKDGQEGR. N-linked (GlcNAc...) asparagine glycosylation is found at N314 and N371. Residues 801 to 872 form a disordered region; that stretch reads DADSSQTGEK…NNVGKSGRRD (72 aa). Residues 813–849 show a composition bias toward basic and acidic residues; sequence EEIKNHASDRRQKIQDLERPGQDELYHGNFPGDREEG. A helical membrane pass occupies residues 916 to 936; it reads LEIGMYALLGVFCLAILVFLI. The Cytoplasmic portion of the chain corresponds to 937–1099; sequence NCATFAFKYR…TYLEKFQDSV (163 aa). The tract at residues 1002 to 1045 is disordered; the sequence is NHLLLNGGSQKPTQSQVHRPPGSGGRQTREPRQEPANSPTSKMK. Residues 1008-1018 are compositionally biased toward polar residues; it reads GGSQKPTQSQV.

The protein belongs to the TMEM132 family.

The protein resides in the membrane. This chain is Transmembrane protein 132C (Tmem132c), found in Mus musculus (Mouse).